Consider the following 529-residue polypeptide: Peptide chain release factor 3 (529 aa).

In terms of domain architecture, tr-type G spans 11–280 (AKRRTFAIIS…GLIEWAPQPM (270 aa)). Residues 20–27 (SHPDAGKT), 88–92 (DTPGH), and 142–145 (NKLD) each bind GTP.

Belongs to the TRAFAC class translation factor GTPase superfamily. Classic translation factor GTPase family. PrfC subfamily.

The protein resides in the cytoplasm. Increases the formation of ribosomal termination complexes and stimulates activities of RF-1 and RF-2. It binds guanine nucleotides and has strong preference for UGA stop codons. It may interact directly with the ribosome. The stimulation of RF-1 and RF-2 is significantly reduced by GTP and GDP, but not by GMP. This is Peptide chain release factor 3 from Enterobacter sp. (strain 638).